A 429-amino-acid polypeptide reads, in one-letter code: 3-phosphoshikimate 1-carboxyvinyltransferase (429 aa).

The 3-phosphoshikimate site is built by Lys-20, Ser-21, and Arg-25. Lys-20 contacts phosphoenolpyruvate. Residues Gly-89 and Arg-118 each coordinate phosphoenolpyruvate. Positions 164, 165, 166, 192, 311, and 338 each coordinate 3-phosphoshikimate. Residue Gln-166 coordinates phosphoenolpyruvate. Residue Asp-311 is the Proton acceptor of the active site. Phosphoenolpyruvate contacts are provided by Arg-342 and Arg-384.

It belongs to the EPSP synthase family. Monomer.

The protein resides in the cytoplasm. The catalysed reaction is 3-phosphoshikimate + phosphoenolpyruvate = 5-O-(1-carboxyvinyl)-3-phosphoshikimate + phosphate. The protein operates within metabolic intermediate biosynthesis; chorismate biosynthesis. Functionally, catalyzes the transfer of the enolpyruvyl moiety of phosphoenolpyruvate (PEP) to the 5-hydroxyl of shikimate-3-phosphate (S3P) to produce enolpyruvyl shikimate-3-phosphate and inorganic phosphate. The chain is 3-phosphoshikimate 1-carboxyvinyltransferase from Methanococcus maripaludis (strain C6 / ATCC BAA-1332).